The sequence spans 512 residues: UDP-N-acetylglucosamine--peptide N-acetylglucosaminyltransferase GtfA subunit (512 aa).

16 to 19 (GVEY) provides a ligand contact to UDP. An N-acetyl-D-glucosamine-binding site is contributed by His-251. UDP is bound by residues 393 to 394 (QH) and 413 to 416 (EGFG).

The protein belongs to the glycosyltransferase group 1 family. Glycosyltransferase 4 subfamily. In terms of assembly, forms a heterotetramer with 2 subunits each of GtfA and GtfB. Part of the accessory SecA2/SecY2 protein translocation apparatus.

It is found in the cytoplasm. It localises to the cell membrane. It catalyses the reaction L-seryl-[protein] + UDP-N-acetyl-alpha-D-glucosamine = 3-O-[N-acetyl-alpha-D-glucosaminyl]-L-seryl-[protein] + UDP + H(+). The protein operates within protein modification; protein glycosylation. In terms of biological role, required for polymorphic O-glycosylation of the serine-rich repeat protein (SRRP) in this bacteria. Catalyzes the first step in glycosylation by transferring N-acetylglucosamine from UDP-GlcNAc to serine residues in the substrate protein. Part of the accessory SecA2/SecY2 system specifically required to export serine-rich repeat cell wall proteins encoded in the same operon. The GtfA-GtfB complex adds GlcNAc from UDP-GlcNAc to SRRP (experimentally characterized with a truncated SSR1 construct); the alpha linkage was shown for this enzyme but not the residues glycosylated on SRRP. In Limosilactobacillus reuteri subsp. suis (strain ATCC 53608 / LMG 31752 / 1063) (Lactobacillus reuteri), this protein is UDP-N-acetylglucosamine--peptide N-acetylglucosaminyltransferase GtfA subunit.